The sequence spans 350 residues: DNA-directed RNA polymerase subunit alpha (350 aa).

Residues M1 to N226 are alpha N-terminal domain (alpha-NTD). Residues A241–L350 are alpha C-terminal domain (alpha-CTD). The interval A326 to L350 is disordered. Residues Y336–L350 show a composition bias toward acidic residues.

Belongs to the RNA polymerase alpha chain family. In terms of assembly, homodimer. The RNAP catalytic core consists of 2 alpha, 1 beta, 1 beta' and 1 omega subunit. When a sigma factor is associated with the core the holoenzyme is formed, which can initiate transcription.

The catalysed reaction is RNA(n) + a ribonucleoside 5'-triphosphate = RNA(n+1) + diphosphate. DNA-dependent RNA polymerase catalyzes the transcription of DNA into RNA using the four ribonucleoside triphosphates as substrates. The sequence is that of DNA-directed RNA polymerase subunit alpha from Mycobacterium sp. (strain JLS).